A 161-amino-acid chain; its full sequence is Putative HTH-type transcriptional regulator MT1325 (161 aa).

Residues 2 to 132 (RMSAKAEYAV…EETTLADVAG (131 aa)) enclose the HTH rrf2-type domain.

The chain is Putative HTH-type transcriptional regulator MT1325 from Mycobacterium tuberculosis (strain CDC 1551 / Oshkosh).